The sequence spans 83 residues: Putative beta-neurotoxin RjAa12f (83 aa).

An N-terminal signal peptide occupies residues 1–18 (MKILIFIIASFMLIGVEC). Positions 19–82 (KEGYPMGRDG…VWDSSTNKCG (64 aa)) constitute an LCN-type CS-alpha/beta domain. 4 disulfides stabilise this stretch: cysteine 29/cysteine 81, cysteine 33/cysteine 55, cysteine 40/cysteine 62, and cysteine 44/cysteine 64. Residue glycine 83 is a propeptide.

Contains 4 disulfide bonds. As to expression, expressed by the venom gland.

Its subcellular location is the secreted. Functionally, beta toxins bind voltage-independently at site-4 of sodium channels (Nav) and shift the voltage of activation toward more negative potentials thereby affecting sodium channel activation and promoting spontaneous and repetitive firing. This toxin is lethal to insects (A.domestica). It is not toxic to mice and does not affect mammal F11 sodium channels. The chain is Putative beta-neurotoxin RjAa12f from Rhopalurus junceus (Caribbean blue scorpion).